Reading from the N-terminus, the 158-residue chain is UPF0178 protein RPA2191 (158 aa).

The protein belongs to the UPF0178 family.

This chain is UPF0178 protein RPA2191, found in Rhodopseudomonas palustris (strain ATCC BAA-98 / CGA009).